We begin with the raw amino-acid sequence, 142 residues long: Transcriptional regulator MraZ (142 aa).

SpoVT-AbrB domains follow at residues alanine 5–valine 51 and alanine 77–lysine 120.

It belongs to the MraZ family. Forms oligomers.

The protein localises to the cytoplasm. The protein resides in the nucleoid. The polypeptide is Transcriptional regulator MraZ (Janthinobacterium sp. (strain Marseille) (Minibacterium massiliensis)).